We begin with the raw amino-acid sequence, 333 residues long: Anthranilate phosphoribosyltransferase (333 aa).

5-phospho-alpha-D-ribose 1-diphosphate contacts are provided by residues Gly-81, 84-85 (GD), Thr-89, 91-94 (NIST), 109-117 (KHGNRSVSS), and Ala-121. Position 81 (Gly-81) interacts with anthranilate. Mg(2+) is bound at residue Ser-93. Residue Asn-112 coordinates anthranilate. Arg-167 serves as a coordination point for anthranilate. Asp-225 and Glu-226 together coordinate Mg(2+).

It belongs to the anthranilate phosphoribosyltransferase family. As to quaternary structure, homodimer. Mg(2+) is required as a cofactor.

The enzyme catalyses N-(5-phospho-beta-D-ribosyl)anthranilate + diphosphate = 5-phospho-alpha-D-ribose 1-diphosphate + anthranilate. The protein operates within amino-acid biosynthesis; L-tryptophan biosynthesis; L-tryptophan from chorismate: step 2/5. Its function is as follows. Catalyzes the transfer of the phosphoribosyl group of 5-phosphorylribose-1-pyrophosphate (PRPP) to anthranilate to yield N-(5'-phosphoribosyl)-anthranilate (PRA). The polypeptide is Anthranilate phosphoribosyltransferase (Haemophilus influenzae (strain PittEE)).